The following is a 424-amino-acid chain: Histidine--tRNA ligase (424 aa).

This sequence belongs to the class-II aminoacyl-tRNA synthetase family. In terms of assembly, homodimer.

Its subcellular location is the cytoplasm. It carries out the reaction tRNA(His) + L-histidine + ATP = L-histidyl-tRNA(His) + AMP + diphosphate + H(+). This is Histidine--tRNA ligase from Protochlamydia amoebophila (strain UWE25).